The sequence spans 631 residues: 2-isopropylmalate synthase 2, chloroplastic (631 aa).

Residues 1-46 (MESSILKSPNLSSPSFGVPSIPALSSSSTSPFSSLHLRSQNHRTIS) constitute a chloroplast transit peptide. The 274-residue stretch at 87–360 (VRIFDTTLRD…FTGIDTRHIV (274 aa)) folds into the Pyruvate carboxyltransferase domain. A divalent metal cation is bound by residues Asp-96, His-293, and Asn-329.

The protein belongs to the alpha-IPM synthase/homocitrate synthase family. LeuA type 1 subfamily. As to quaternary structure, homotetramer. Requires Mg(2+) as cofactor. Mn(2+) serves as cofactor. In terms of tissue distribution, expressed in roots, stems, leaves, flowers and siliques.

The protein localises to the plastid. The protein resides in the chloroplast. The enzyme catalyses 3-methyl-2-oxobutanoate + acetyl-CoA + H2O = (2S)-2-isopropylmalate + CoA + H(+). Its pathway is amino-acid biosynthesis; L-leucine biosynthesis; L-leucine from 3-methyl-2-oxobutanoate: step 1/4. With respect to regulation, feedback inhibition by Leu. In terms of biological role, catalyzes the condensation of the acetyl group of acetyl-CoA with 3-methyl-2-oxobutanoate (2-oxoisovalerate) to form 3-carboxy-3-hydroxy-4-methylpentanoate (2-isopropylmalate). Involved in Leu biosynthesis, but does not participate in the chain elongation of glucosinolates. The polypeptide is 2-isopropylmalate synthase 2, chloroplastic (Arabidopsis thaliana (Mouse-ear cress)).